The sequence spans 87 residues: MAHKKGSGSTKNGRDSRSQRLGIKKYGGESVIIGNIIIRQRGSQFKPGVNVKLGKDDTLFALANGKVIFKKKKKKHTIVNVIENILQ.

Positions 1–20 are disordered; sequence MAHKKGSGSTKNGRDSRSQR.

The protein belongs to the bacterial ribosomal protein bL27 family.

It localises to the plastid. The protein resides in the chloroplast. This Gracilaria tenuistipitata var. liui (Red alga) protein is Large ribosomal subunit protein bL27c.